A 421-amino-acid polypeptide reads, in one-letter code: Glutamate-1-semialdehyde 2,1-aminomutase 1 (421 aa).

Residue K258 is modified to N6-(pyridoxal phosphate)lysine.

Belongs to the class-III pyridoxal-phosphate-dependent aminotransferase family. HemL subfamily. Requires pyridoxal 5'-phosphate as cofactor.

It is found in the cytoplasm. The enzyme catalyses (S)-4-amino-5-oxopentanoate = 5-aminolevulinate. It participates in porphyrin-containing compound metabolism; protoporphyrin-IX biosynthesis; 5-aminolevulinate from L-glutamyl-tRNA(Glu): step 2/2. The polypeptide is Glutamate-1-semialdehyde 2,1-aminomutase 1 (Cenarchaeum symbiosum (strain A)).